Consider the following 416-residue polypeptide: Gamma-glutamyl phosphate reductase (416 aa).

The protein belongs to the gamma-glutamyl phosphate reductase family.

It localises to the cytoplasm. It carries out the reaction L-glutamate 5-semialdehyde + phosphate + NADP(+) = L-glutamyl 5-phosphate + NADPH + H(+). Its pathway is amino-acid biosynthesis; L-proline biosynthesis; L-glutamate 5-semialdehyde from L-glutamate: step 2/2. In terms of biological role, catalyzes the NADPH-dependent reduction of L-glutamate 5-phosphate into L-glutamate 5-semialdehyde and phosphate. The product spontaneously undergoes cyclization to form 1-pyrroline-5-carboxylate. In Salmonella schwarzengrund (strain CVM19633), this protein is Gamma-glutamyl phosphate reductase.